The primary structure comprises 740 residues: Vertnin (740 aa).

Disordered stretches follow at residues 485–506 (EAGE…RGLI), 560–616 (PGMQ…DQNV), and 653–673 (TQSQ…APGG). Basic and acidic residues predominate over residues 578–604 (QKPEGRQKPEEQQKPEGRQKPEGRQKP). Residues 653–667 (TQSQPHSGSLPSQTL) show a composition bias toward polar residues.

This sequence belongs to the vertnin family.

The protein resides in the nucleus. Its function is as follows. Acts as a transcription factor that regulates development of thoracic vertebrae. The protein is Vertnin (Vrtn) of Mus musculus (Mouse).